Consider the following 368-residue polypeptide: Phosphate acyltransferase (368 aa).

Residues 337–368 (LGEGEHNAGGAGHASPAAGHHAEPSAAQSSKA) are disordered. Low complexity predominate over residues 349-368 (HASPAAGHHAEPSAAQSSKA).

The protein belongs to the PlsX family. As to quaternary structure, homodimer. Probably interacts with PlsY.

The protein resides in the cytoplasm. It catalyses the reaction a fatty acyl-[ACP] + phosphate = an acyl phosphate + holo-[ACP]. It participates in lipid metabolism; phospholipid metabolism. Catalyzes the reversible formation of acyl-phosphate (acyl-PO(4)) from acyl-[acyl-carrier-protein] (acyl-ACP). This enzyme utilizes acyl-ACP as fatty acyl donor, but not acyl-CoA. The sequence is that of Phosphate acyltransferase from Burkholderia lata (strain ATCC 17760 / DSM 23089 / LMG 22485 / NCIMB 9086 / R18194 / 383).